The chain runs to 575 residues: Chaperonin 60 subunit alpha 2, chloroplastic (575 aa).

Over residues 1-18 the composition is skewed to low complexity; that stretch reads MFAVSPSSFSPTTISPRR. A disordered region spans residues 1-27; that stretch reads MFAVSPSSFSPTTISPRRSGQRNEPRK. A chloroplast-targeting transit peptide spans 1–32; sequence MFAVSPSSFSPTTISPRRSGQRNEPRKFSVVR.

The protein belongs to the chaperonin (HSP60) family. In terms of assembly, part of the Cpn60 complex composed of 7 alpha and 7 beta subunits.

The protein localises to the plastid. Its subcellular location is the chloroplast. In terms of biological role, involved in protein assisted folding. The protein is Chaperonin 60 subunit alpha 2, chloroplastic (CPN60A2) of Arabidopsis thaliana (Mouse-ear cress).